Consider the following 323-residue polypeptide: Methionyl-tRNA formyltransferase (323 aa).

115 to 118 (SLLP) provides a ligand contact to (6S)-5,6,7,8-tetrahydrofolate.

Belongs to the Fmt family.

It carries out the reaction L-methionyl-tRNA(fMet) + (6R)-10-formyltetrahydrofolate = N-formyl-L-methionyl-tRNA(fMet) + (6S)-5,6,7,8-tetrahydrofolate + H(+). Its function is as follows. Attaches a formyl group to the free amino group of methionyl-tRNA(fMet). The formyl group appears to play a dual role in the initiator identity of N-formylmethionyl-tRNA by promoting its recognition by IF2 and preventing the misappropriation of this tRNA by the elongation apparatus. This chain is Methionyl-tRNA formyltransferase, found in Lactococcus lactis subsp. cremoris (strain MG1363).